Here is an 865-residue protein sequence, read N- to C-terminus: Protein translocase subunit SecA (865 aa).

ATP contacts are provided by residues Gln93, 111–115 (GEGKT), and Asp501. Cys841, Cys843, Cys852, and Cys853 together coordinate Zn(2+).

The protein belongs to the SecA family. As to quaternary structure, monomer and homodimer. Part of the essential Sec protein translocation apparatus which comprises SecA, SecYEG and auxiliary proteins SecDF-YajC and YidC. Zn(2+) serves as cofactor.

It localises to the cell inner membrane. The protein resides in the cytoplasm. The enzyme catalyses ATP + H2O + cellular proteinSide 1 = ADP + phosphate + cellular proteinSide 2.. In terms of biological role, part of the Sec protein translocase complex. Interacts with the SecYEG preprotein conducting channel. Has a central role in coupling the hydrolysis of ATP to the transfer of proteins into and across the cell membrane, serving as an ATP-driven molecular motor driving the stepwise translocation of polypeptide chains across the membrane. In Helicobacter pylori (strain ATCC 700392 / 26695) (Campylobacter pylori), this protein is Protein translocase subunit SecA.